Consider the following 391-residue polypeptide: Putative gustatory receptor 36b (391 aa).

Residues 1–4 are Cytoplasmic-facing; the sequence is MVDW. Residues 5–25 form a helical membrane-spanning segment; that stretch reads VVLLLKAVHIYCYLIGLSNFE. Over 26 to 39 the chain is Extracellular; the sequence is FDCRTGRVFKSRRC. The chain crosses the membrane as a helical span at residues 40–60; it reads TIYAFMANIFILITIIYNFTA. At 61–74 the chain is on the cytoplasmic side; sequence HGDTNLLFQSANKL. The helical transmembrane segment at 75–95 threads the bilayer; the sequence is HEYVIIIMSGLKIVAGLITVL. The Extracellular segment spans residues 96–127; sequence NRWLQRGQMMQLVKDVIRLYMINPQLKSMIRW. Residues 128–148 traverse the membrane as a helical segment; that stretch reads GILLKAFISFAIELLQVTLSV. Over 149–165 the chain is Cytoplasmic; that stretch reads DALDRQGTAEMMGLLVK. A helical transmembrane segment spans residues 166-186; sequence LCVSFIMNLAISQHFLVILLI. Residues 187–284 are Extracellular-facing; sequence RAQYRIMNAK…YKYGPHNLKL (98 aa). The chain crosses the membrane as a helical span at residues 285-305; that stretch reads SAKTSIIVCILITLFYLDALV. Over 306 to 363 the chain is Cytoplasmic; the sequence is NCNNMLRVLDHHKDFLGLLEERTVFASSLDIRLEESFESLQLQLARNPLKINVMGMFP. A helical membrane pass occupies residues 364–384; it reads ITRGSTAAMCASVIVNSIFLI. Topologically, residues 385 to 391 are extracellular; sequence QFDMEFF.

Belongs to the insect chemoreceptor superfamily. Gustatory receptor (GR) family. Gr22e subfamily. Expressed in neurons of the terminal external chemosensory organ of larvae.

It localises to the cell membrane. Probable gustatory receptor which mediates acceptance or avoidance behavior, depending on its substrates. This is Putative gustatory receptor 36b (Gr36b) from Drosophila melanogaster (Fruit fly).